The sequence spans 546 residues: MAAKQVLFADDARVRIVRGVNVLANAVKTTLGPKGRNVVLERSFGAPTVTKDGVSVAKEIELKDKFENIGAQLVKDVASKTSDNAGDGTTTATVLAQAIVQEGLKYVAAGFNPIDLKRGIDKAVAAAVVELKKASKPVTTSKEIAQVGSISANSDSSIGQIIADAMDKVGKEGVITVEDGKSLENELDVVEGMQFDRGYLSPYFINNPEKQVAALDDPFVLIYDKKISNIRDLLPVLEQVAKSSRPLLIIAEDVEGEALATLVVNNIRGILKTTAVKAPGFGDRRKAMLEDIAILTGGTVISEETGMSLEKATLQELGQAKRIEVAKENTTIIDGAGDGKSIEARVKQIRAQIEEATSDYDREKLQERVAKLAGGVAVIRVGAATEVEMKEKKARVEDALHATRAAVEEGVVAGGGVALLRAKQAIAGLQGDTPDQNAGIKLILRAVEEPLRTIVTNAGEEASVVVNNVLNGKGNYGYNAATGEYTDLVEQGVLDPTKVTRTALQNAASVASLLLTAEAAVVELAEDKPAAPAMPGGMGGMGGMDF.

ATP is bound by residues 30-33 (TLGP), Lys51, 87-91 (DGTTT), Gly415, 479-481 (NAA), and Asp495.

This sequence belongs to the chaperonin (HSP60) family. As to quaternary structure, forms a cylinder of 14 subunits composed of two heptameric rings stacked back-to-back. Interacts with the co-chaperonin GroES.

The protein resides in the cytoplasm. The enzyme catalyses ATP + H2O + a folded polypeptide = ADP + phosphate + an unfolded polypeptide.. Functionally, together with its co-chaperonin GroES, plays an essential role in assisting protein folding. The GroEL-GroES system forms a nano-cage that allows encapsulation of the non-native substrate proteins and provides a physical environment optimized to promote and accelerate protein folding. The protein is Chaperonin GroEL of Bordetella avium (strain 197N).